The chain runs to 359 residues: Probable L-ascorbate peroxidase 7, chloroplastic (359 aa).

Residues 1–71 (MAAQRLAALH…KAAGSGRSVM (71 aa)) constitute a chloroplast transit peptide. Histidine 118 acts as the Proton acceptor in catalysis. Heme b is bound at residue histidine 247. Threonine 248 lines the K(+) pocket. The tract at residues 251-277 (RSRPERSGWGKPETKYTKNGPGAPGGQ) is disordered. A compositionally biased stretch (basic and acidic residues) spans 252 to 266 (SRPERSGWGKPETKY). Residues threonine 280 and aspartate 287 each contribute to the K(+) site.

The protein belongs to the peroxidase family. Ascorbate peroxidase subfamily. It depends on heme b as a cofactor. Expressed in roots, leaves, stems and flowers.

The protein localises to the plastid. The protein resides in the chloroplast stroma. The enzyme catalyses L-ascorbate + H2O2 = L-dehydroascorbate + 2 H2O. Functionally, plays a key role in hydrogen peroxide removal. This Oryza sativa subsp. japonica (Rice) protein is Probable L-ascorbate peroxidase 7, chloroplastic.